A 293-amino-acid chain; its full sequence is Elongation factor Ts (293 aa).

Residues 80–83 (TDFV) form an involved in Mg(2+) ion dislocation from EF-Tu region.

This sequence belongs to the EF-Ts family.

Its subcellular location is the cytoplasm. Associates with the EF-Tu.GDP complex and induces the exchange of GDP to GTP. It remains bound to the aminoacyl-tRNA.EF-Tu.GTP complex up to the GTP hydrolysis stage on the ribosome. The polypeptide is Elongation factor Ts (Staphylococcus aureus (strain Newman)).